A 185-amino-acid polypeptide reads, in one-letter code: Small ribosomal subunit protein uS4 (185 aa).

The region spanning Arg108 to His170 is the S4 RNA-binding domain.

The protein belongs to the universal ribosomal protein uS4 family. In terms of assembly, part of the 30S ribosomal subunit. Contacts protein S5. The interaction surface between S4 and S5 is involved in control of translational fidelity.

In terms of biological role, one of the primary rRNA binding proteins, it binds directly to 16S rRNA where it nucleates assembly of the body of the 30S subunit. With S5 and S12 plays an important role in translational accuracy. This chain is Small ribosomal subunit protein uS4, found in Methanoregula boonei (strain DSM 21154 / JCM 14090 / 6A8).